The following is a 226-amino-acid chain: 3-dehydroquinate dehydratase (226 aa).

3-dehydroquinate-binding positions include 33–35 (ELR) and arginine 65. The Proton donor/acceptor role is filled by histidine 120. Catalysis depends on lysine 147, which acts as the Schiff-base intermediate with substrate. 3-dehydroquinate contacts are provided by arginine 186, serine 205, and glutamine 209.

It belongs to the type-I 3-dehydroquinase family. As to quaternary structure, homodimer.

The enzyme catalyses 3-dehydroquinate = 3-dehydroshikimate + H2O. It participates in metabolic intermediate biosynthesis; chorismate biosynthesis; chorismate from D-erythrose 4-phosphate and phosphoenolpyruvate: step 3/7. In terms of biological role, involved in the third step of the chorismate pathway, which leads to the biosynthesis of aromatic amino acids. Catalyzes the cis-dehydration of 3-dehydroquinate (DHQ) and introduces the first double bond of the aromatic ring to yield 3-dehydroshikimate. This is 3-dehydroquinate dehydratase from Thermodesulfovibrio yellowstonii (strain ATCC 51303 / DSM 11347 / YP87).